The chain runs to 409 residues: FBD-associated F-box protein At4g10400 (409 aa).

The 47-residue stretch at 1–47 (MDRISGLPDEVLVKILSFVPTKVAVSTSILSKRWEFLWMWLTKLKFG) folds into the F-box domain. The FBD domain occupies 330–379 (SWNQPSIVPECMLSSLQKFTWFKYLGRPQDRDIAVYILKNACRLRTATIK).

The chain is FBD-associated F-box protein At4g10400 from Arabidopsis thaliana (Mouse-ear cress).